The sequence spans 392 residues: Multidrug resistance protein MdtL (392 aa).

Transmembrane regions (helical) follow at residues phenylalanine 4–valine 24, alanine 38–alanine 58, valine 70–alanine 90, leucine 95–isoleucine 115, leucine 131–methionine 151, serine 158–leucine 178, isoleucine 209–leucine 229, alanine 246–phenylalanine 266, threonine 270–threonine 290, leucine 294–methionine 314, valine 331–glycine 351, and methionine 357–threonine 377.

It belongs to the major facilitator superfamily. DHA1 family. MdtL (TC 2.A.1.2.22) subfamily.

The protein resides in the cell inner membrane. This is Multidrug resistance protein MdtL from Klebsiella pneumoniae (strain 342).